The chain runs to 418 residues: F-box protein At5g03970 (418 aa).

The F-box domain maps to Ser-18–Ala-66.

The sequence is that of F-box protein At5g03970 from Arabidopsis thaliana (Mouse-ear cress).